The following is a 696-amino-acid chain: Catalase (696 aa).

Catalysis depends on residues H64 and N137. The interval 187–211 (SLAQGSQISSERGSPKAYSNTEPNK) is disordered. A compositionally biased stretch (polar residues) spans 189 to 208 (AQGSQISSERGSPKAYSNTE). Y353 provides a ligand contact to heme.

It belongs to the catalase family. Heme serves as cofactor.

It carries out the reaction 2 H2O2 = O2 + 2 H2O. In terms of biological role, occurs in almost all aerobically respiring organisms and serves to protect cells from the toxic effects of hydrogen peroxide. In Penicillium janthinellum (Penicillium vitale), this protein is Catalase.